Reading from the N-terminus, the 440-residue chain is Indoleamine 2,3-dioxygenase qulI (440 aa).

Residue His347 coordinates heme.

It belongs to the indoleamine 2,3-dioxygenase family. Monomer. Heme serves as cofactor.

It carries out the reaction D-tryptophan + O2 = N-formyl-D-kynurenine. It catalyses the reaction L-tryptophan + O2 = N-formyl-L-kynurenine. It functions in the pathway secondary metabolite biosynthesis. In terms of biological role, indoleamine 2,3-dioxygenase; part of the gene cluster that mediates the biosynthesis of quinolactacin A2 (QUL A2), a fungal alkaloid that features a quinolone-gamma-lactam hybrid, which is a potential pharmacophore for the treatment of cancer and Alzheimer's disease. The quinolone-gamma-lactam hybrid scaffold is synthesized from the combination of L-isoleucine (L-Ile) and the nonproteinogenic amino acid L-kynurenine, followed by quinolone cyclization, oxidative decarboxylation, and lactam formation. Additionally, the N-methyl group is derived from methionine, which might be catalyzed by an S-adenosylmethionine (SAM)-dependent methyltransferase. Bioconversion of L-tryptophan to L-kynurenine could be catalyzed by the indoleamine-2,3-dioxygenase (IDO) qulI to produce an unstable product, N-formyl-L-kynurenine, followed by kynurenine formamidase catalyzed hydrolysis. QulM then acts as a methyltransferase that methylates L-kynurenine at the N-4 position. The FMN-dependent alpha-hydroxy acid dehydrogenase qulF than functions as an oxidative decarboxylase which converts N-methylkynurenine into 2-aminobenzoylacetamide via 2 tandem reactions, including dehydrogenation and decarboxylation. An amidase located outside of the qul gene cluster further produces the unstable beta-keto acid precursor N-methyl-2-aminobenzoylacetate, which could be spontaneously dehydrated to form N-methyl-4-hydroxy-2-quinolone. The NRPS qulB is able to incorporate N-methyl-2-aminobenzoylacetate and efficiently compete with the spontaneous reaction. By further extending the beta-keto acid with L-Ile, qulA performs a Dieckmann condensation to form the gamma-lactam ring and release a 4-ketopyrrolidinone intermediate from the assembly line. This intermediate could plausibly further undergo a spontaneous cyclization to yield the final quinolone-gamma-lactam hybrid structure. The chain is Indoleamine 2,3-dioxygenase qulI from Penicillium citrinum.